Reading from the N-terminus, the 325-residue chain is Methionyl-tRNA formyltransferase (325 aa).

112 to 115 (SLLP) lines the (6S)-5,6,7,8-tetrahydrofolate pocket.

Belongs to the Fmt family.

The catalysed reaction is L-methionyl-tRNA(fMet) + (6R)-10-formyltetrahydrofolate = N-formyl-L-methionyl-tRNA(fMet) + (6S)-5,6,7,8-tetrahydrofolate + H(+). Its function is as follows. Attaches a formyl group to the free amino group of methionyl-tRNA(fMet). The formyl group appears to play a dual role in the initiator identity of N-formylmethionyl-tRNA by promoting its recognition by IF2 and preventing the misappropriation of this tRNA by the elongation apparatus. This chain is Methionyl-tRNA formyltransferase, found in Roseiflexus sp. (strain RS-1).